Reading from the N-terminus, the 341-residue chain is Cyanuric acid amidohydrolase (341 aa).

The tract at residues 1–90 (MAPIEILKFP…HVTFFLRSPG (90 aa)) is RU A. Substrate contacts are provided by residues R51 and 71–72 (SG). An RU B region spans residues 95–229 (GLSAAVGHTR…CHILVLASTS (135 aa)). The active site involves K144. Substrate contacts are provided by residues R176 and 212 to 213 (SS). S212 serves as the catalytic Nucleophile. The segment at 235–341 (LHAVSRPMAD…SLCLVYETSI (107 aa)) is RU C. Residue E273 participates in Mg(2+) binding. Substrate contacts are provided by residues R300 and 319–320 (SG). Mg(2+)-binding residues include A322, Q325, G326, P327, and G330.

The protein belongs to the cyclic amide hydrolase (CyAH) family. As to quaternary structure, homotetramer.

It carries out the reaction cyanurate + H2O = 1-carboxybiuret + H(+). The protein operates within xenobiotic degradation; atrazine degradation; biuret from cyanurate: step 1/1. Its activity is regulated as follows. Inhibited by barbituric acid. Its function is as follows. Responsible for the hydrolysis of cyanuric acid, an intermediate formed during catabolism of s-triazine based compounds in herbicides such as atrazine and polymers such as melamine. Catalyzes the hydrolytic opening of the s-triazine ring of cyanuric acid (2,4,6-trihydroxy-s-triazine) to yield carbon dioxide and carboxybiuret, which spontaneously decarboxylates to biuret. Only active on cyanuric acid and N-methylisocyanuric acid. The polypeptide is Cyanuric acid amidohydrolase (Sarocladium sp).